A 230-amino-acid polypeptide reads, in one-letter code: 2,3-bisphosphoglycerate-dependent phosphoglycerate mutase (230 aa).

Substrate contacts are provided by residues 8–15 (RHGQSIWN), 21–22 (TG), Arg-60, 87–90 (ERHY), Lys-98, and 114–115 (RR). The active-site Tele-phosphohistidine intermediate is His-9. The Proton donor/acceptor role is filled by Glu-87. The interval 117–143 (YDTPPPALDAEDERHPRHDPRYAGLDP) is disordered. Positions 128–137 (DERHPRHDPR) are enriched in basic and acidic residues. Substrate is bound at residue 183–184 (GN).

This sequence belongs to the phosphoglycerate mutase family. BPG-dependent PGAM subfamily. In terms of assembly, homodimer.

The catalysed reaction is (2R)-2-phosphoglycerate = (2R)-3-phosphoglycerate. The protein operates within carbohydrate degradation; glycolysis; pyruvate from D-glyceraldehyde 3-phosphate: step 3/5. Catalyzes the interconversion of 2-phosphoglycerate and 3-phosphoglycerate. This chain is 2,3-bisphosphoglycerate-dependent phosphoglycerate mutase, found in Halorhodospira halophila (strain DSM 244 / SL1) (Ectothiorhodospira halophila (strain DSM 244 / SL1)).